Consider the following 199-residue polypeptide: Nuclear transcription factor Y subunit C-2 (199 aa).

This sequence belongs to the NFYC/HAP5 subunit family. In terms of assembly, heterotrimeric transcription factor composed of three components, NF-YA, NF-YB and NF-YC. NF-YB and NF-YC must interact and dimerize for NF-YA association and DNA binding. Interacts with HTT1 in both cytoplasm and nucleus. As to expression, ubiquitous.

It is found in the nucleus. The protein resides in the cytoplasm. Stimulates the transcription of various genes by recognizing and binding to a CCAAT motif in promoters. The sequence is that of Nuclear transcription factor Y subunit C-2 (NFYC2) from Arabidopsis thaliana (Mouse-ear cress).